The sequence spans 181 residues: Ribulose bisphosphate carboxylase small subunit, chloroplastic 1 (181 aa).

A chloroplast-targeting transit peptide spans 1–54; sequence MASSMLSSAAVVTSPAQATMVAPFTGLKSSSAFPVTRKANNDITSIVSNGGRVS.

It belongs to the RuBisCO small chain family. As to quaternary structure, heterohexadecamer of 8 large and 8 small subunits.

The protein localises to the plastid. It is found in the chloroplast. Functionally, ruBisCO catalyzes two reactions: the carboxylation of D-ribulose 1,5-bisphosphate, the primary event in carbon dioxide fixation, as well as the oxidative fragmentation of the pentose substrate. Both reactions occur simultaneously and in competition at the same active site. Although the small subunit is not catalytic it is essential for maximal activity. The polypeptide is Ribulose bisphosphate carboxylase small subunit, chloroplastic 1 (Brassica napus (Rape)).